The chain runs to 79 residues: Acyl carrier protein (79 aa).

Positions 3 to 78 (QEILEKVRSI…DAVSYIQEKK (76 aa)) constitute a Carrier domain. An O-(pantetheine 4'-phosphoryl)serine modification is found at serine 38.

This sequence belongs to the acyl carrier protein (ACP) family. 4'-phosphopantetheine is transferred from CoA to a specific serine of apo-ACP by AcpS. This modification is essential for activity because fatty acids are bound in thioester linkage to the sulfhydryl of the prosthetic group.

It localises to the cytoplasm. The protein operates within lipid metabolism; fatty acid biosynthesis. Carrier of the growing fatty acid chain in fatty acid biosynthesis. The chain is Acyl carrier protein from Synechococcus sp. (strain RCC307).